We begin with the raw amino-acid sequence, 305 residues long: Uridylate-specific endoribonuclease D (305 aa).

The N-terminal stretch at 1–17 (MKVYFVFLCLLPSLISG) is a signal peptide. The 273-residue stretch at 33-305 (SNAEIQSLAE…RYVASSYPNI (273 aa)) folds into the EndoU domain. Residues His182, His197, and Lys240 contribute to the active site. Residue Asn288 is glycosylated (N-linked (GlcNAc...) asparagine).

It belongs to the ENDOU family. In terms of assembly, monomer. Mn(2+) serves as cofactor.

Its subcellular location is the secreted. The catalysed reaction is ribonucleotidyl-uridine-RNA = a 5'-end dephospho-uridine-RNA + a 3'-end 2',3'-cyclophospho-ribonucleotide-RNA. In terms of biological role, endoribonuclease that cleaves single-stranded RNAs at 5' of uridylates and releases a product with a 2',3'-cyclic phosphate at the 3'-end. This chain is Uridylate-specific endoribonuclease D (endou-d), found in Xenopus laevis (African clawed frog).